Consider the following 211-residue polypeptide: dITP/XTP pyrophosphatase (211 aa).

Residue 13–18 (THNPGK) coordinates substrate. Positions 45 and 74 each coordinate Mg(2+). Asp74 (proton acceptor) is an active-site residue. Substrate-binding positions include Ser75, 160 to 163 (FGYD), Lys183, and 195 to 196 (HR).

Belongs to the HAM1 NTPase family. Homodimer. It depends on Mg(2+) as a cofactor.

It carries out the reaction XTP + H2O = XMP + diphosphate + H(+). It catalyses the reaction dITP + H2O = dIMP + diphosphate + H(+). The catalysed reaction is ITP + H2O = IMP + diphosphate + H(+). Pyrophosphatase that catalyzes the hydrolysis of nucleoside triphosphates to their monophosphate derivatives, with a high preference for the non-canonical purine nucleotides XTP (xanthosine triphosphate), dITP (deoxyinosine triphosphate) and ITP. Seems to function as a house-cleaning enzyme that removes non-canonical purine nucleotides from the nucleotide pool, thus preventing their incorporation into DNA/RNA and avoiding chromosomal lesions. The polypeptide is dITP/XTP pyrophosphatase (Bradyrhizobium diazoefficiens (strain JCM 10833 / BCRC 13528 / IAM 13628 / NBRC 14792 / USDA 110)).